The following is a 136-amino-acid chain: Preprocaerulein type I' (136 aa).

An N-terminal signal peptide occupies residues Met1–Ala26. A propeptide spanning residues Asp27–Arg136 is cleaved from the precursor. Residues Gly82–Asp101 form a disordered region.

The protein belongs to the gastrin/cholecystokinin family. Expressed by the skin glands.

The protein localises to the secreted. In terms of biological role, the pharmacological activities of caerulein are quite similar to the physiological activities of gastrin and related peptides. The chain is Preprocaerulein type I' from Xenopus laevis (African clawed frog).